A 110-amino-acid chain; its full sequence is Large ribosomal subunit protein uL24 (110 aa).

It belongs to the universal ribosomal protein uL24 family. Part of the 50S ribosomal subunit.

Its function is as follows. One of two assembly initiator proteins, it binds directly to the 5'-end of the 23S rRNA, where it nucleates assembly of the 50S subunit. One of the proteins that surrounds the polypeptide exit tunnel on the outside of the subunit. The polypeptide is Large ribosomal subunit protein uL24 (Caldicellulosiruptor saccharolyticus (strain ATCC 43494 / DSM 8903 / Tp8T 6331)).